A 484-amino-acid chain; its full sequence is UDP-N-acetylmuramate--L-alanine ligase (484 aa).

G124 to T130 lines the ATP pocket.

Belongs to the MurCDEF family.

It is found in the cytoplasm. The enzyme catalyses UDP-N-acetyl-alpha-D-muramate + L-alanine + ATP = UDP-N-acetyl-alpha-D-muramoyl-L-alanine + ADP + phosphate + H(+). It participates in cell wall biogenesis; peptidoglycan biosynthesis. In terms of biological role, cell wall formation. The protein is UDP-N-acetylmuramate--L-alanine ligase of Pseudoalteromonas atlantica (strain T6c / ATCC BAA-1087).